Reading from the N-terminus, the 908-residue chain is MKSSVAQIKPSSGHDRRENLNSYQRNSSPEDRYEEQERSPRDRDYFDYSRSDYEHSRRGRSYDSSMESRNRDREKRRERERDTDRKRSRKSPSPGRRNPETSVTQSSSAQDEPATKKKKDELDPLLTRTGGAYIPPAKLRMMQEQITDKNSLAYQRMSWEALKKSINGLINKVNISNISIIIQELLQENIVRGRGLLSRSVLQAQSASPIFTHVYAALVAIINSKFPQIGELILKRLILNFRKGYRRNDKQLCLTASKFVAHLINQNVAHEVLCLEMLTLLLERPTDDSVEVAIGFLKECGLKLTQVSPRGINAIFERLRNILHESEIDKRVQYMIEVMFAVRKDGFKDHPIILEGLDLVEEDDQFTHMLPLEDDYNPEDVLNVFKMDPNFMENEEKYKAIKKEILDEGDTDSNTDQDAGSSEEDEEEEEEEGEEDEEGQKVTIHDKTEINLVSFRRTIYLAIQSSLDFEECAHKLLKMEFPESQTKELCNMILDCCAQQRTYEKFFGLLAGRFCMLKKEYMESFEGIFKEQYDTIHRLETNKLRNVAKMFAHLLYTDSLPWSVLECIKLSEETTTSSSRIFVKIFFQELCEYMGLPKLNARLKDETLQPFFEGLLPRDNPRNTRFAINFFTSIGLGGLTDELREHLKNTPKVIVAQKPDVEQNKSSPSSSSSASSSSESDSSDSDSDSSDSSSESSSEESDSSSISSHSSASANDVRKKGHGKTRSKEVDKLIRNQQTNDRKQKERRQEHGHQETRTERERRSEKHRDQNSSGSNWRDPITKYTSDKDVPSERNNYSRVANDRDQEMHIDLENKHGDPKKKRGERRNSFSENEKHTHRIKDSENFRRKDRSKSKEMNRKHSGSRSDEDRYQNGAERRWEKSSRYSEQSRESKKNQDRRREKSPAKQK.

Residues 1–10 show a composition bias toward polar residues; the sequence is MKSSVAQIKP. The segment at 1–129 is disordered; sequence MKSSVAQIKP…DELDPLLTRT (129 aa). Residues 28–56 are compositionally biased toward basic and acidic residues; the sequence is SPEDRYEEQERSPRDRDYFDYSRSDYEHS. Phosphoserine occurs at positions 39 and 61. The segment covering 66 to 85 has biased composition (basic and acidic residues); that stretch reads MESRNRDREKRRERERDTDR. A compositionally biased stretch (polar residues) spans 100–110; sequence ETSVTQSSSAQ. Ser107 carries the post-translational modification Phosphoserine. Residues 113 to 122 show a composition bias toward basic and acidic residues; that stretch reads PATKKKKDEL. The MIF4G domain maps to 163–346; that stretch reads KKSINGLINK…EVMFAVRKDG (184 aa). The interval 404–443 is disordered; that stretch reads EILDEGDTDSNTDQDAGSSEEDEEEEEEEGEEDEEGQKVT. A compositionally biased stretch (acidic residues) spans 407–438; sequence DEGDTDSNTDQDAGSSEEDEEEEEEEGEEDEE. One can recognise an MI domain in the interval 454 to 570; it reads SFRRTIYLAI…PWSVLECIKL (117 aa). Residues 654–908 form a disordered region; sequence IVAQKPDVEQ…RREKSPAKQK (255 aa). Composition is skewed to low complexity over residues 666–680 and 703–714; these read SSPS…SSES and SSSISSHSSASA. Basic and acidic residues predominate over residues 726–770; it reads RSKEVDKLIRNQQTNDRKQKERRQEHGHQETRTERERRSEKHRDQ. Position 786 is a phosphoserine (Ser786). 2 stretches are compositionally biased toward basic and acidic residues: residues 801 to 817 and 826 to 908; these read ANDR…NKHG and RRNS…AKQK. Ser829 is modified (phosphoserine).

The protein belongs to the CWC22 family. In terms of assembly, component of the pre-catalytic spliceosome B and the catalytic spliceosome C complexes. Component of the minor spliceosome, which splices U12-type introns. Interacts with EIF4A3 and PRPF19 in an RNA-independent manner. Direct interaction with EIF4A3 is mediated by the MIF4G domain. Full interaction with EIF4A3 occurs only when EIF4A3 is not part of the EJC and prevents EIF4A3 binding to RNA.

Its subcellular location is the nucleus. It is found in the nucleus speckle. Its function is as follows. Required for pre-mRNA splicing as component of the spliceosome. As a component of the minor spliceosome, involved in the splicing of U12-type introns in pre-mRNAs. Promotes exon-junction complex (EJC) assembly. Hinders EIF4A3 from non-specifically binding RNA and escorts it to the splicing machinery to promote EJC assembly on mature mRNAs. Through its role in EJC assembly, required for nonsense-mediated mRNA decay. In Homo sapiens (Human), this protein is Pre-mRNA-splicing factor CWC22 homolog (CWC22).